We begin with the raw amino-acid sequence, 479 residues long: Mannose-1-phosphate guanylyltransferase RfbM (479 aa).

It belongs to the mannose-6-phosphate isomerase type 2 family. Homodimer.

It catalyses the reaction alpha-D-mannose 1-phosphate + GTP + H(+) = GDP-alpha-D-mannose + diphosphate. Its pathway is nucleotide-sugar biosynthesis; GDP-alpha-D-mannose biosynthesis; GDP-alpha-D-mannose from alpha-D-mannose 1-phosphate (GTP route): step 1/1. It functions in the pathway bacterial outer membrane biogenesis; LPS O-antigen biosynthesis. Involved in GDP-mannose biosynthesis which serves as the activated sugar nucleotide precursor for mannose residues in cell surface polysaccharides. This enzyme participates in synthesis of the LPS group B O antigen. The chain is Mannose-1-phosphate guanylyltransferase RfbM (rfbM) from Salmonella typhimurium (strain LT2 / SGSC1412 / ATCC 700720).